The chain runs to 406 residues: CinA-like protein (406 aa).

Belongs to the CinA family.

This chain is CinA-like protein, found in Pseudothermotoga lettingae (strain ATCC BAA-301 / DSM 14385 / NBRC 107922 / TMO) (Thermotoga lettingae).